We begin with the raw amino-acid sequence, 94 residues long: Co-chaperonin GroES (94 aa).

It belongs to the GroES chaperonin family. In terms of assembly, heptamer of 7 subunits arranged in a ring. Interacts with the chaperonin GroEL.

Its subcellular location is the cytoplasm. Functionally, together with the chaperonin GroEL, plays an essential role in assisting protein folding. The GroEL-GroES system forms a nano-cage that allows encapsulation of the non-native substrate proteins and provides a physical environment optimized to promote and accelerate protein folding. GroES binds to the apical surface of the GroEL ring, thereby capping the opening of the GroEL channel. The polypeptide is Co-chaperonin GroES (Lactococcus lactis subsp. cremoris (strain MG1363)).